The primary structure comprises 406 residues: Cysteine--tRNA ligase (406 aa).

Cys16 serves as a coordination point for Zn(2+). The short motif at 18–28 (PTVYSDVHIGN) is the 'HIGH' region element. Residues Cys192, His218, and Glu222 each coordinate Zn(2+). The 'KMSKS' region signature appears at 250–254 (KMAKS). Lys253 provides a ligand contact to ATP.

The protein belongs to the class-I aminoacyl-tRNA synthetase family. In terms of assembly, monomer. Zn(2+) is required as a cofactor.

The protein resides in the cytoplasm. The enzyme catalyses tRNA(Cys) + L-cysteine + ATP = L-cysteinyl-tRNA(Cys) + AMP + diphosphate. This is Cysteine--tRNA ligase from Mesomycoplasma hyopneumoniae (strain J / ATCC 25934 / NCTC 10110) (Mycoplasma hyopneumoniae).